We begin with the raw amino-acid sequence, 279 residues long: 4-diphosphocytidyl-2-C-methyl-D-erythritol kinase (279 aa).

Residue Lys9 is part of the active site. Position 93 to 103 (93 to 103) interacts with ATP; the sequence is PMGAGLGGGSS. Asp135 is an active-site residue.

It belongs to the GHMP kinase family. IspE subfamily.

The catalysed reaction is 4-CDP-2-C-methyl-D-erythritol + ATP = 4-CDP-2-C-methyl-D-erythritol 2-phosphate + ADP + H(+). It functions in the pathway isoprenoid biosynthesis; isopentenyl diphosphate biosynthesis via DXP pathway; isopentenyl diphosphate from 1-deoxy-D-xylulose 5-phosphate: step 3/6. Its function is as follows. Catalyzes the phosphorylation of the position 2 hydroxy group of 4-diphosphocytidyl-2C-methyl-D-erythritol. The protein is 4-diphosphocytidyl-2-C-methyl-D-erythritol kinase of Acinetobacter baylyi (strain ATCC 33305 / BD413 / ADP1).